The following is a 310-amino-acid chain: Olfactory receptor 8I2 (310 aa).

Topologically, residues 1 to 25 (MAGNNFTEVTVFILSGFANHPELQV) are extracellular. An N-linked (GlcNAc...) asparagine glycan is attached at Asn5. Residues 26–46 (SLFLMFLFIYLFTVLGNLGLI) traverse the membrane as a helical segment. Topologically, residues 47-54 (TLIRMDSQ) are cytoplasmic. A helical transmembrane segment spans residues 55–75 (LHTPMYFFLSNLAFIDIFYSS). At 76–99 (TVTPKALVNFQSNRRSISFVGCFV) the chain is on the extracellular side. A disulfide bridge connects residues Cys97 and Cys188. The chain crosses the membrane as a helical span at residues 100-120 (QMYFFVGLVCCECFLLGSMAY). The Cytoplasmic segment spans residues 121–139 (NRYIAICNPLLYSVVMSQK). The helical transmembrane segment at 140–160 (VSNWLGVMPYVIGFTSSLISV) threads the bilayer. Topologically, residues 161 to 196 (WVISSLAFCDSSINHFFCDTTALLALSCVDTFGTEM) are extracellular. Residues 197-216 (VSFVLAGFTLLSSLLIITVT) traverse the membrane as a helical segment. Residues 217–236 (YIIIISAILRIQSAAGRQKA) lie on the Cytoplasmic side of the membrane. A helical transmembrane segment spans residues 237–257 (FSTCASHLMAVTIFYGSLIFT). Residues 258–270 (YLQPDNTSSLTQA) lie on the Extracellular side of the membrane. The helical transmembrane segment at 271–291 (QVASVFYTIVIPMLNPLIYSL) threads the bilayer. At 292 to 310 (RNKDVKNALLRVIHRKLFP) the chain is on the cytoplasmic side.

Belongs to the G-protein coupled receptor 1 family.

The protein resides in the cell membrane. Functionally, odorant receptor. This chain is Olfactory receptor 8I2 (OR8I2), found in Homo sapiens (Human).